The following is a 407-amino-acid chain: Peptidase T (407 aa).

Position 82 (histidine 82) interacts with Zn(2+). Aspartate 84 is a catalytic residue. Aspartate 143 contributes to the Zn(2+) binding site. Glutamate 177 (proton acceptor) is an active-site residue. 3 residues coordinate Zn(2+): glutamate 178, aspartate 200, and histidine 382.

It belongs to the peptidase M20B family. It depends on Zn(2+) as a cofactor.

Its subcellular location is the cytoplasm. The catalysed reaction is Release of the N-terminal residue from a tripeptide.. Its function is as follows. Cleaves the N-terminal amino acid of tripeptides. The polypeptide is Peptidase T (Streptococcus pyogenes serotype M12 (strain MGAS2096)).